Reading from the N-terminus, the 354-residue chain is Protein RecA (354 aa).

Residue 65-72 (GPESSGKT) coordinates ATP.

The protein belongs to the RecA family.

The protein resides in the cytoplasm. Functionally, can catalyze the hydrolysis of ATP in the presence of single-stranded DNA, the ATP-dependent uptake of single-stranded DNA by duplex DNA, and the ATP-dependent hybridization of homologous single-stranded DNAs. It interacts with LexA causing its activation and leading to its autocatalytic cleavage. The sequence is that of Protein RecA from Pseudomonas savastanoi pv. phaseolicola (strain 1448A / Race 6) (Pseudomonas syringae pv. phaseolicola (strain 1448A / Race 6)).